Here is a 172-residue protein sequence, read N- to C-terminus: Large ribosomal subunit protein uL10 (172 aa).

Belongs to the universal ribosomal protein uL10 family. In terms of assembly, part of the ribosomal stalk of the 50S ribosomal subunit. The N-terminus interacts with L11 and the large rRNA to form the base of the stalk. The C-terminus forms an elongated spine to which L12 dimers bind in a sequential fashion forming a multimeric L10(L12)X complex.

Functionally, forms part of the ribosomal stalk, playing a central role in the interaction of the ribosome with GTP-bound translation factors. The chain is Large ribosomal subunit protein uL10 from Francisella philomiragia subsp. philomiragia (strain ATCC 25017 / CCUG 19701 / FSC 153 / O#319-036).